A 339-amino-acid chain; its full sequence is Large ribosomal subunit protein uL29 (339 aa).

The tract at residues 1–96 is large ribosomal subunit protein uL29; the sequence is MNDLTKKSVE…FAKQRKAKIE (96 aa). Residues 97-339 are unknown; sequence QMMAEQQAAE…KTTKKGTGKK (243 aa). 2 disordered regions span residues 129 to 254 and 311 to 339; these read VVST…VPTK and KENR…TGKK. A compositionally biased stretch (low complexity) spans 145 to 156; the sequence is APVAAKKPAAAK. The segment covering 157-170 has biased composition (basic and acidic residues); it reads DFPKQKDVVEEKTA. Positions 171–182 are enriched in low complexity; it reads TGKPAAPSAKKA. Over residues 185-210 the composition is skewed to basic and acidic residues; sequence AKKDVAQETKTDKDAALKALIKEKAA. The segment covering 217–238 has biased composition (low complexity); that stretch reads KSKTSTPSGKTTVTVKSVTSAK. The segment covering 239–248 has biased composition (basic and acidic residues); it reads ADIEVPKETS.

Belongs to the universal ribosomal protein uL29 family. In terms of assembly, forms homomultimers. Part of the ribosome; radioactive IRS binds to purified ribosomes.

In terms of biological role, specifically binds a DNA inverted repeat sequence (IRS) found downstream of rpsB in one of the ribosomal subunit operons (for genes rpsB, tsf, and unknown gene x). Might be involved in regulation of transcription of the rpsB operon; the IRS may be a control element to attenuate transcription. In Spiroplasma citri, this protein is Large ribosomal subunit protein uL29.